The sequence spans 497 residues: Serine hydroxymethyltransferase (497 aa).

(6S)-5,6,7,8-tetrahydrofolate is bound by residues leucine 176 and 180-182 (GHL). Lysine 289 carries the post-translational modification N6-(pyridoxal phosphate)lysine. (6S)-5,6,7,8-tetrahydrofolate is bound at residue glutamate 306.

Belongs to the SHMT family. Homodimer. Pyridoxal 5'-phosphate is required as a cofactor.

Its subcellular location is the cytoplasm. The catalysed reaction is (6R)-5,10-methylene-5,6,7,8-tetrahydrofolate + glycine + H2O = (6S)-5,6,7,8-tetrahydrofolate + L-serine. It functions in the pathway one-carbon metabolism; tetrahydrofolate interconversion. It participates in amino-acid biosynthesis; glycine biosynthesis; glycine from L-serine: step 1/1. Its function is as follows. Catalyzes the reversible interconversion of serine and glycine with tetrahydrofolate (THF) serving as the one-carbon carrier. This reaction serves as the major source of one-carbon groups required for the biosynthesis of purines, thymidylate, methionine, and other important biomolecules. Also exhibits THF-independent aldolase activity toward beta-hydroxyamino acids, producing glycine and aldehydes, via a retro-aldol mechanism. In Chlamydia pneumoniae (Chlamydophila pneumoniae), this protein is Serine hydroxymethyltransferase.